Reading from the N-terminus, the 156-residue chain is MPRKGYTKRQEVLPDPIYNSKLVSRLINKLMLDGKRGTASTILYDAFDRIKEATGNEPLEVFEQAMENIMPVLEVKARRVGGSNYQVPIEVRPDRRTTLGLRWLVNYSRLRNEHTMDERLAKEIMDAANDTGASVKKREDTHKMAEANRAFAHYRW.

The protein belongs to the universal ribosomal protein uS7 family. As to quaternary structure, part of the 30S ribosomal subunit. Contacts proteins S9 and S11.

Its function is as follows. One of the primary rRNA binding proteins, it binds directly to 16S rRNA where it nucleates assembly of the head domain of the 30S subunit. Is located at the subunit interface close to the decoding center, probably blocks exit of the E-site tRNA. The sequence is that of Small ribosomal subunit protein uS7 from Leuconostoc citreum (strain KM20).